The sequence spans 129 residues: Selenoprotein M (129 aa).

Residues 1 to 19 form the signal peptide; that stretch reads MARGLAVFFLLAGACLALA. Residues Cys-35 and Sec-38 each act as nucleophile in the active site. Position 38 (Sec-38) is a non-standard amino acid, selenocysteine. A disordered region spans residues 107-129; it reads KSSKDEQVPEEYQEGPYMEKEEL. The Prevents secretion from ER motif lies at 126–129; it reads KEEL.

The protein belongs to the selenoprotein M/F family. As to expression, high expression levels observed in hepatopancreas, testis, ovaries and intestine. Also expressed in heart, stomach, gills, cranial ganglia, muscle and hematocytes.

The protein localises to the endoplasmic reticulum. Functionally, may function as a thiol-disulfide oxidoreductase that participates in disulfide bond formation. Involved in the regulation of reproduction during the period of rapid gonadal development. This is Selenoprotein M from Eriocheir sinensis (Chinese mitten crab).